A 227-amino-acid polypeptide reads, in one-letter code: Uracil-DNA glycosylase (227 aa).

Aspartate 64 acts as the Proton acceptor in catalysis.

The protein belongs to the uracil-DNA glycosylase (UDG) superfamily. UNG family.

Its subcellular location is the cytoplasm. It catalyses the reaction Hydrolyzes single-stranded DNA or mismatched double-stranded DNA and polynucleotides, releasing free uracil.. In terms of biological role, excises uracil residues from the DNA which can arise as a result of misincorporation of dUMP residues by DNA polymerase or due to deamination of cytosine. The protein is Uracil-DNA glycosylase of Serratia proteamaculans (strain 568).